The chain runs to 332 residues: tRNA U34 carboxymethyltransferase (332 aa).

Residues lysine 91, tryptophan 105, lysine 110, glycine 130, 152–154 (DPS), 181–182 (IE), methionine 196, tyrosine 200, and arginine 315 each bind carboxy-S-adenosyl-L-methionine.

Belongs to the class I-like SAM-binding methyltransferase superfamily. CmoB family. In terms of assembly, homotetramer.

The catalysed reaction is carboxy-S-adenosyl-L-methionine + 5-hydroxyuridine(34) in tRNA = 5-carboxymethoxyuridine(34) in tRNA + S-adenosyl-L-homocysteine + H(+). Functionally, catalyzes carboxymethyl transfer from carboxy-S-adenosyl-L-methionine (Cx-SAM) to 5-hydroxyuridine (ho5U) to form 5-carboxymethoxyuridine (cmo5U) at position 34 in tRNAs. The sequence is that of tRNA U34 carboxymethyltransferase from Shewanella putrefaciens (strain CN-32 / ATCC BAA-453).